Here is a 245-residue protein sequence, read N- to C-terminus: Glucan endo-1,3-beta-glucosidase (245 aa).

The N-terminal stretch at 1-23 (MMKTLVVVLSLSLTILSFGGAHA) is a signal peptide. 8 disulfides stabilise this stretch: cysteine 32–cysteine 244, cysteine 80–cysteine 90, cysteine 95–cysteine 102, cysteine 150–cysteine 233, cysteine 155–cysteine 216, cysteine 163–cysteine 179, cysteine 183–cysteine 192, and cysteine 193–cysteine 203.

Belongs to the thaumatin family. In terms of tissue distribution, abundantly expressed in ripening fruit.

Its subcellular location is the secreted. It carries out the reaction Hydrolysis of (1-&gt;3)-beta-D-glucosidic linkages in (1-&gt;3)-beta-D-glucans.. The protein is Glucan endo-1,3-beta-glucosidase of Prunus avium (Cherry).